A 423-amino-acid chain; its full sequence is MTESVLDYMTRLGRAARQASRVIARASTAQKNRALQAAADALDAARAELAAANEQDLAAGRANGLEPALLDRLALTPARIDGMITGLRQVASLPDPVGAIRDMSYRPSGIQVGKMRVPLGVIGIIYESRPNVTIDAASLCLKSGNATILRGGSEAIHSNRAIATCIQRGLAEAGLPAAVVQVVETTDREAVGALISMPEFVDVIVPRGGRGLIERISRDARVPVIKHLDGICHVYVAEHADLDKGWRVAFNAKTYRYGICGAMETLLVDQRVAEGFLPEMARRFQEKGVELRGCERTRALIEAKPASEDDWHTEYLDAILSIRVVDGLDQAIEHINHYGSHHTDSIITEHQGQARQFMAEVDSASVMLNTPTCFADGFEYGLGAEIGISTDKLHARGPVGLEGLTCEKYVVIGDGQLRGQESC.

This sequence belongs to the gamma-glutamyl phosphate reductase family.

The protein resides in the cytoplasm. It carries out the reaction L-glutamate 5-semialdehyde + phosphate + NADP(+) = L-glutamyl 5-phosphate + NADPH + H(+). The protein operates within amino-acid biosynthesis; L-proline biosynthesis; L-glutamate 5-semialdehyde from L-glutamate: step 2/2. Its function is as follows. Catalyzes the NADPH-dependent reduction of L-glutamate 5-phosphate into L-glutamate 5-semialdehyde and phosphate. The product spontaneously undergoes cyclization to form 1-pyrroline-5-carboxylate. This Pseudomonas putida (strain W619) protein is Gamma-glutamyl phosphate reductase.